Reading from the N-terminus, the 423-residue chain is 3-isopropylmalate dehydratase large subunit 1 (423 aa).

Cys302, Cys362, and Cys365 together coordinate [4Fe-4S] cluster.

This sequence belongs to the aconitase/IPM isomerase family. LeuC type 2 subfamily. As to quaternary structure, heterodimer of LeuC and LeuD. Requires [4Fe-4S] cluster as cofactor.

The catalysed reaction is (2R,3S)-3-isopropylmalate = (2S)-2-isopropylmalate. It participates in amino-acid biosynthesis; L-leucine biosynthesis; L-leucine from 3-methyl-2-oxobutanoate: step 2/4. Functionally, catalyzes the isomerization between 2-isopropylmalate and 3-isopropylmalate, via the formation of 2-isopropylmaleate. The chain is 3-isopropylmalate dehydratase large subunit 1 from Pyrococcus abyssi (strain GE5 / Orsay).